A 146-amino-acid polypeptide reads, in one-letter code: Protein STIG1 (146 aa).

Residues 1–23 form the signal peptide; the sequence is MAFINLLILIILTLSSTPITTMS. 3 N-linked (GlcNAc...) asparagine glycosylation sites follow: N31, N61, and N84.

It belongs to the STIG1 family. Glycosylated. As to expression, expressed exclusively in the stigmatic secretory zone.

Its subcellular location is the secreted. Involved in the temporal regulation of the exudate secretion onto the stigma. The protein is Protein STIG1 of Nicotiana tabacum (Common tobacco).